Consider the following 502-residue polypeptide: Lysine--tRNA ligase (502 aa).

2 residues coordinate Mg(2+): E403 and E410.

Belongs to the class-II aminoacyl-tRNA synthetase family. As to quaternary structure, homodimer. It depends on Mg(2+) as a cofactor.

It localises to the cytoplasm. The enzyme catalyses tRNA(Lys) + L-lysine + ATP = L-lysyl-tRNA(Lys) + AMP + diphosphate. This is Lysine--tRNA ligase from Synechococcus sp. (strain CC9902).